The chain runs to 376 residues: tRNA-specific 2-thiouridylase MnmA (376 aa).

ATP is bound by residues 19 to 26 and Met45; that span reads GMSGGVDS. The interval 105–107 is interaction with target base in tRNA; sequence NPD. The active-site Nucleophile is the Cys110. Residues Cys110 and Cys210 are joined by a disulfide bond. Residue Gly134 coordinates ATP. The interaction with tRNA stretch occupies residues 160–162; that stretch reads KDQ. The Cysteine persulfide intermediate role is filled by Cys210. The interval 326-327 is interaction with tRNA; the sequence is RY.

It belongs to the MnmA/TRMU family.

Its subcellular location is the cytoplasm. It catalyses the reaction S-sulfanyl-L-cysteinyl-[protein] + uridine(34) in tRNA + AH2 + ATP = 2-thiouridine(34) in tRNA + L-cysteinyl-[protein] + A + AMP + diphosphate + H(+). Its function is as follows. Catalyzes the 2-thiolation of uridine at the wobble position (U34) of tRNA, leading to the formation of s(2)U34. This is tRNA-specific 2-thiouridylase MnmA from Bordetella petrii (strain ATCC BAA-461 / DSM 12804 / CCUG 43448).